The chain runs to 137 residues: ATP synthase epsilon chain (137 aa).

This sequence belongs to the ATPase epsilon chain family. As to quaternary structure, F-type ATPases have 2 components, CF(1) - the catalytic core - and CF(0) - the membrane proton channel. CF(1) has five subunits: alpha(3), beta(3), gamma(1), delta(1), epsilon(1). CF(0) has three main subunits: a, b and c.

Its subcellular location is the cell inner membrane. In terms of biological role, produces ATP from ADP in the presence of a proton gradient across the membrane. The sequence is that of ATP synthase epsilon chain from Magnetococcus marinus (strain ATCC BAA-1437 / JCM 17883 / MC-1).